The following is a 347-amino-acid chain: N-acetyl-gamma-glutamyl-phosphate reductase (347 aa).

The active site involves cysteine 151.

This sequence belongs to the NAGSA dehydrogenase family. Type 1 subfamily.

It localises to the cytoplasm. It catalyses the reaction N-acetyl-L-glutamate 5-semialdehyde + phosphate + NADP(+) = N-acetyl-L-glutamyl 5-phosphate + NADPH + H(+). It functions in the pathway amino-acid biosynthesis; L-arginine biosynthesis; N(2)-acetyl-L-ornithine from L-glutamate: step 3/4. Its function is as follows. Catalyzes the NADPH-dependent reduction of N-acetyl-5-glutamyl phosphate to yield N-acetyl-L-glutamate 5-semialdehyde. This is N-acetyl-gamma-glutamyl-phosphate reductase from Corynebacterium aurimucosum (strain ATCC 700975 / DSM 44827 / CIP 107346 / CN-1) (Corynebacterium nigricans).